The sequence spans 57 residues: Large ribosomal subunit protein bL32 (57 aa).

The span at 1–20 shows a compositional bias: basic residues; it reads MAVPKKKTSKTKRDQRKANW. Positions 1–21 are disordered; it reads MAVPKKKTSKTKRDQRKANWK.

Belongs to the bacterial ribosomal protein bL32 family.

This is Large ribosomal subunit protein bL32 from Rippkaea orientalis (strain PCC 8801 / RF-1) (Cyanothece sp. (strain PCC 8801)).